A 202-amino-acid chain; its full sequence is uncharacterized protein (202 aa).

Residues 10–30 form a helical membrane-spanning segment; that stretch reads TAAIFLLCCTSVIILFTIAVV.

This sequence belongs to the bacterial sugar transferase family.

The protein localises to the cell membrane. In terms of biological role, may be involved in the production of the exopolysaccharide (EPS) component of the extracellular matrix during biofilm formation. EPS is responsible for the adhesion of chains of cells into bundles. This is an uncharacterized protein from Bacillus subtilis (strain 168).